An 872-amino-acid chain; its full sequence is Leucine-rich repeat-containing protein 66 (872 aa).

Residues 4–24 (FYVRVTILVTGLCFVETVTTP) form a helical membrane-spanning segment. Asparagine 45 and asparagine 108 each carry an N-linked (GlcNAc...) asparagine glycan. LRR repeat units follow at residues 142 to 164 (RLQV…WKLK), 165 to 186 (SLRS…DFHG), 189 to 210 (QLES…AFKG), 213 to 234 (KLQV…VTIA), and 239 to 259 (HLEL…VNFQ). The disordered stretch occupies residues 339 to 363 (LRGMWPQSPVELRDSQDEQVTDRKD). Residues 349-363 (ELRDSQDEQVTDRKD) show a composition bias toward basic and acidic residues. A helical membrane pass occupies residues 371–391 (LAICLSVFITFVVAFCLGAFA). A compositionally biased stretch (polar residues) spans 467–483 (QMLGSNGTDPGHQQSPE). 4 disordered regions span residues 467 to 501 (QMLG…VLPS), 560 to 579 (GTFP…SQPR), 695 to 761 (NYES…SQRI), and 776 to 872 (LISG…SKHW). Asparagine 472 carries N-linked (GlcNAc...) asparagine glycosylation. The segment covering 484 to 493 (QLKDSNESRS) has biased composition (basic and acidic residues). The residue at position 718 (serine 718) is a Phosphoserine. Polar residues-rich tracts occupy residues 725–736 (SVENDGTSQPLP), 746–760 (SVTS…TSQR), and 785–805 (CETN…STWP). Serine 752 carries the phosphoserine modification. A compositionally biased stretch (basic and acidic residues) spans 831 to 841 (VDWHYSLRDLE).

Its subcellular location is the membrane. The sequence is that of Leucine-rich repeat-containing protein 66 (Lrrc66) from Mus musculus (Mouse).